The following is a 179-amino-acid chain: Large ribosomal subunit protein uL5 (179 aa).

The protein belongs to the universal ribosomal protein uL5 family. Part of the 50S ribosomal subunit; part of the 5S rRNA/L5/L18/L25 subcomplex. Contacts the 5S rRNA and the P site tRNA. Forms a bridge to the 30S subunit in the 70S ribosome.

Its function is as follows. This is one of the proteins that bind and probably mediate the attachment of the 5S RNA into the large ribosomal subunit, where it forms part of the central protuberance. In the 70S ribosome it contacts protein S13 of the 30S subunit (bridge B1b), connecting the 2 subunits; this bridge is implicated in subunit movement. Contacts the P site tRNA; the 5S rRNA and some of its associated proteins might help stabilize positioning of ribosome-bound tRNAs. The chain is Large ribosomal subunit protein uL5 from Bacillus cereus (strain Q1).